Here is a 491-residue protein sequence, read N- to C-terminus: MTETRLRFPPSPTGYLHIGGARTALYNWLYAKQHGGKLVLRIEDTDTERSTEESIKGIVDGLDWLGIDFDEGPYFQTDFASDHKSAAQKLLDSGQAYKCFCSKESLDEKREAALAAKKSLGYDGTCRNLTAEQIAEKEAAGAPYVLRFRVPECESVSYEDKIAGTIRVARSEIDDFVIVRSNGAPLYLLCNVVDDIRDRISHVIRGQDHMTNTIKQILLYEALDAPIPVFAHMPLTLDNKRAKISKRSHGEIVAVQFYRDHGFLPWALNNFLAMLGWSAGDDKEFYTKEELLKAFSLERINKSSSIFNYRKGDPKFFTDPKAISMNEHYIRNMDITELGKLVQKELEADGLWDTAYADEKADWYLATIDMIRARFHTLKDFATLGRAYFGEDYVVEEKPLKKNVLKFEGLKEWLPLLGERYASLDDFSAEETERVARELADELELKPGVIINGMRTAVTGQLAGPSMFDIVTTLGQERMVKRLREAGRLFA.

The 'HIGH' region motif lies at 10–20 (PSPTGYLHIGG). Positions 243–247 (KISKR) match the 'KMSKS' region motif. Lys-246 provides a ligand contact to ATP.

Belongs to the class-I aminoacyl-tRNA synthetase family. Glutamate--tRNA ligase type 1 subfamily. As to quaternary structure, monomer.

It is found in the cytoplasm. The enzyme catalyses tRNA(Glu) + L-glutamate + ATP = L-glutamyl-tRNA(Glu) + AMP + diphosphate. Its function is as follows. Catalyzes the attachment of glutamate to tRNA(Glu) in a two-step reaction: glutamate is first activated by ATP to form Glu-AMP and then transferred to the acceptor end of tRNA(Glu). The polypeptide is Glutamate--tRNA ligase (Desulfotalea psychrophila (strain LSv54 / DSM 12343)).